The sequence spans 908 residues: SH3 and PX domain-containing protein 2B (908 aa).

Residues 5 to 129 enclose the PX domain; that stretch reads RSIVEVKVLD…QFFETRPEDL (125 aa). Tyr25 is subject to Phosphotyrosine. SH3 domains are found at residues 152–211 and 221–280; these read MVLE…GQDG and EEEE…KNSG. A phosphoserine mark is found at Ser279 and Ser291. Disordered regions lie at residues 280-300 and 315-366; these read GEPL…ALDL and ELLN…PPIP. Positions 315–337 are enriched in basic and acidic residues; it reads ELLNNQRDGRFEGRLVPDGDVKQ. The span at 338–347 shows a compositional bias: basic residues; sequence RSPKMRQRPP. An SH3 3 domain is found at 368–427; sequence QVEEEYYTIAEFQTTIPDGISFQAGLKVEVIEKSLSGWWYIQMEDKEGWAPATFIDKYKK. Residues 455–832 form a disordered region; it reads TENNTGPEAV…LGPRVTGKVG (378 aa). 5 stretches are compositionally biased toward basic and acidic residues: residues 486–499, 516–546, 569–584, 595–606, and 615–625; these read KDWK…RKAS, QEEK…KMEP, LARD…DKSK, CGHKVLAKEVKK, and SKAELSEEKVD. Phosphoserine is present on residues Ser499 and Ser528. Tyr661 carries the post-translational modification Phosphotyrosine. Positions 671–684 are enriched in basic and acidic residues; that stretch reads KSQEKALLDGESHH. Residues 754 to 764 show a composition bias toward pro residues; the sequence is VVPPRRPPPPK. Ser840 is modified (phosphoserine). The region spanning 847–908 is the SH3 4 domain; the sequence is PKDSLYVAVA…IPSNYLRKKP (62 aa).

The protein belongs to the SH3PXD2 family. Interacts with NOXO1. Interacts (via SH3 domains) with NOXA1; the interaction is direct. Interacts with ADAM15. Interacts with FASLG. In terms of processing, phosphorylated in SRC-transformed cells. Highly expressed in the stromal-vascular fraction of white adipose tissue with moderate expression in heart, skeletal muscle and the mature adipocyte fraction of white adipose tissue. Also expressed in brain, spleen, kidney and liver. Expressed in white and brown adipose tissues, eye, lung, heart, brain, spleen, stomach, liver and skeletal muscle (at protein level). Not expressed in kidney or bone marrow.

The protein localises to the cytoplasm. It is found in the cell projection. Its subcellular location is the podosome. Adapter protein involved in invadopodia and podosome formation and extracellular matrix degradation. Binds matrix metalloproteinases (ADAMs), NADPH oxidases (NOXs) and phosphoinositides. Acts as an organizer protein that allows NOX1- or NOX3-dependent reactive oxygen species (ROS) generation and ROS localization. Plays a role in mitotic clonal expansion during the immediate early stage of adipocyte differentiation. In Mus musculus (Mouse), this protein is SH3 and PX domain-containing protein 2B (Sh3pxd2b).